The following is a 334-amino-acid chain: Anthranilate phosphoribosyltransferase (334 aa).

5-phospho-alpha-D-ribose 1-diphosphate-binding positions include Gly-79, 82–83, Ser-87, 89–92, 107–115, and Ser-119; these read GD, NIST, and KHGNRSISS. Gly-79 lines the anthranilate pocket. Residue Ser-91 coordinates Mg(2+). Residue Asn-110 participates in anthranilate binding. Arg-165 contributes to the anthranilate binding site. 2 residues coordinate Mg(2+): Asp-224 and Glu-225.

The protein belongs to the anthranilate phosphoribosyltransferase family. Homodimer. Mg(2+) serves as cofactor.

It carries out the reaction N-(5-phospho-beta-D-ribosyl)anthranilate + diphosphate = 5-phospho-alpha-D-ribose 1-diphosphate + anthranilate. The protein operates within amino-acid biosynthesis; L-tryptophan biosynthesis; L-tryptophan from chorismate: step 2/5. Functionally, catalyzes the transfer of the phosphoribosyl group of 5-phosphorylribose-1-pyrophosphate (PRPP) to anthranilate to yield N-(5'-phosphoribosyl)-anthranilate (PRA). The sequence is that of Anthranilate phosphoribosyltransferase from Streptococcus pneumoniae (strain 70585).